The chain runs to 594 residues: Beta-fructofuranosidase, insoluble isoenzyme CWINV3 (594 aa).

An N-terminal signal peptide occupies residues 1 to 28 (MAKLNRSNIGLSLLLSMFLANFITDLEA). Substrate-binding positions include 50–53 (WMND), Q69, W77, and 113–114 (WS). Residue D53 is part of the active site. The N-linked (GlcNAc...) asparagine glycan is linked to N147. 179–180 (RD) contributes to the substrate binding site. N217 carries N-linked (GlcNAc...) asparagine glycosylation. A substrate-binding site is contributed by E235. 2 N-linked (GlcNAc...) asparagine glycosylation sites follow: N297 and N329. Cysteines 428 and 480 form a disulfide.

This sequence belongs to the glycosyl hydrolase 32 family. Expressed in seedlings, leaves, flowers, and seeds.

It is found in the secreted. Its subcellular location is the extracellular space. The protein localises to the apoplast. The protein resides in the cell wall. The enzyme catalyses Hydrolysis of terminal, non-reducing (2-&gt;1)- and (2-&gt;6)-linked beta-D-fructofuranose residues in fructans.. Functionally, 6-fructan exohydrolase that can use phlein, levan, neokestose, levanbiose, 6-kestose, and 1-kestose as substrates. The chain is Beta-fructofuranosidase, insoluble isoenzyme CWINV3 (CWINV3) from Arabidopsis thaliana (Mouse-ear cress).